Consider the following 967-residue polypeptide: Isoleucine--tRNA ligase (967 aa).

The short motif at 68–78 (PYANGTLHMGH) is the 'HIGH' region element. E583 contacts L-isoleucyl-5'-AMP. The short motif at 624–628 (KMSKS) is the 'KMSKS' region element. K627 contacts ATP. Zn(2+) contacts are provided by C937, C940, C957, and C960.

This sequence belongs to the class-I aminoacyl-tRNA synthetase family. IleS type 1 subfamily. As to quaternary structure, monomer. Zn(2+) is required as a cofactor.

The protein localises to the cytoplasm. It catalyses the reaction tRNA(Ile) + L-isoleucine + ATP = L-isoleucyl-tRNA(Ile) + AMP + diphosphate. Catalyzes the attachment of isoleucine to tRNA(Ile). As IleRS can inadvertently accommodate and process structurally similar amino acids such as valine, to avoid such errors it has two additional distinct tRNA(Ile)-dependent editing activities. One activity is designated as 'pretransfer' editing and involves the hydrolysis of activated Val-AMP. The other activity is designated 'posttransfer' editing and involves deacylation of mischarged Val-tRNA(Ile). The protein is Isoleucine--tRNA ligase of Prochlorococcus marinus (strain NATL1A).